The sequence spans 551 residues: Cytochrome P450 monooxygenase virE (551 aa).

Positions 1–25 are cleaved as a signal peptide; the sequence is MPKPWVVFGLGTLVLFLWRLNKIGR. An N-linked (GlcNAc...) asparagine glycan is attached at Asn392. Cys439 provides a ligand contact to heme.

The protein belongs to the cytochrome P450 family. Heme serves as cofactor.

It participates in secondary metabolite biosynthesis. Functionally, cytochrome P450 monooxygenase; part of the gene cluster that mediates the biosynthesis of virensols and trichoxide, fungal natural products that contain or are derived from a salicylaldehyde core. The pathway begins with the synthesis of the reduced chain in virensol C by the highly reducing polyketide synthase virA via condensation of one acetate and 8 malonate units. VirA has interesting programming rules since the first 2 ketides are fully reduced, the 3 following ketides undergo beta-dehydration, and the last 3 ketides are only reduced to beta-hydroxys to yield the trihydroxy portion. The production of aldehyde virensol C by virA alone is surprising, since virA does not contain a reductase (R) domain that is typically associated with reductive product release in HRPKS. The cupin-domain enzyme virC is involved in enhancing virA product turnover. The short-chain dehydrogenase virB then oxidizes the C-7 alcohol of virensol C to a ketone, yielding virensol D. Virensol D is further transformed to salicylaldehyde 5-deoxyaurocitrin by the short-chain dehydrogenase virD. VirD catalyzes the dehydrogenation of C-3 to form the beta-ketone aldehyde, which is followed by the generation of the nucleophilic C-2 that is required for the intramolecular aldol condensation between C-2 and C-7, itself followed by dehydration and aromatization which leads to salicylaldehyde 5-deoxyaurocitrin. While the dehydrogenation of virensol D is definitely catalyzed by virD, the aldol condensation and dehydration may be uncatalyzed or assisted by virD. The short chain dehydrogenase virG then converts salicylaldehyde 5-deoxyaurocitrin into virensol B which is further hydroxylated by the cytochrome P450 monooxygenase virE to yield the hydroquinone virensol A. VirI then may oxidize virensol A to form the quinone, while virH performs the epoxidation. Finally, the two remaining short-chain dehydrogenases, virK and virL, are probably responsible for reducing the ketones to the corresponding alcohols to furnish the epoxycyclohexanol structure in trichoxide. This Hypocrea virens (strain Gv29-8 / FGSC 10586) (Gliocladium virens) protein is Cytochrome P450 monooxygenase virE.